Here is a 105-residue protein sequence, read N- to C-terminus: Small cysteine and glycine repeat-containing protein 6 (105 aa).

A 13 X 2 AA repeats of CG region spans residues 4 to 83 (CGCGGCGGGC…HSCGCGCGCG (80 aa)).

It belongs to the KRTAP type 28 family.

In terms of biological role, in the hair cortex, hair keratin intermediate filaments are embedded in an interfilamentous matrix, consisting of hair keratin-associated proteins (KRTAP), which are essential for the formation of a rigid and resistant hair shaft through their extensive disulfide bond cross-linking with abundant cysteine residues of hair keratins. The matrix proteins include the high-sulfur and high-glycine-tyrosine keratins. The protein is Small cysteine and glycine repeat-containing protein 6 of Homo sapiens (Human).